We begin with the raw amino-acid sequence, 4047 residues long: Cubilin homolog (4047 aa).

An N-terminal signal peptide occupies residues 1–22; the sequence is MIPNLQLFLSLILFGLLNHVSS. N-linked (GlcNAc...) asparagine glycans are attached at residues Asn-56, Asn-92, and Asn-127. An EGF-like 1 domain is found at 168 to 205; the sequence is AINACDPNKCSNGGTCIPSFGAKFTCLCPPHFTGTTCE. Cystine bridges form between Cys-172-Cys-183, Cys-177-Cys-193, Cys-195-Cys-204, Cys-211-Cys-227, Cys-221-Cys-236, Cys-238-Cys-247, Cys-310-Cys-321, Cys-315-Cys-330, Cys-333-Cys-344, Cys-350-Cys-363, Cys-357-Cys-372, Cys-375-Cys-386, Cys-392-Cys-403, Cys-397-Cys-418, Cys-420-Cys-434, Cys-442-Cys-453, Cys-447-Cys-463, Cys-465-Cys-474, Cys-480-Cys-491, Cys-485-Cys-500, Cys-502-Cys-511, Cys-518-Cys-544, Cys-577-Cys-601, Cys-645-Cys-667, Cys-696-Cys-719, and Cys-769-Cys-801. The EGF-like 2; calcium-binding domain maps to 207 to 248; it reads DIDECSVYNGTTAGCQNNGTCINNRGGFECQCQSGYHGSLCQ. 2 N-linked (GlcNAc...) asparagine glycosylation sites follow: Asn-215 and Asn-224. The EGF-like 3; calcium-binding domain occupies 306-345; sequence DVNECESNPCHPGVDCINLPGSFVCSGCPKGYKTDGNVCI. Positions 346 to 387 constitute an EGF-like 4; calcium-binding domain; it reads DVNECEGEIRVCSPLSKCHNTLGSYYCDSCPTGYSGDGGNCV. EGF-like domains are found at residues 388-435, 438-475, and 476-512; these read KDDS…EGCV, ASNV…KFCE, and KTSP…RACE. CUB domains lie at 518 to 641, 645 to 763, 769 to 934, 934 to 1061, 1065 to 1182, 1188 to 1300, 1304 to 1427, 1428 to 1558, 1560 to 1680, and 1691 to 1841; these read CGSH…WETV, CGYR…YKFT, CGAE…YEML, LCEK…YKTS, CGGV…FEAV, CDFT…YETI, CGGR…FTTL, CNGI…WNTL, CSRD…VEFV, and CGQV…MIPK. N-linked (GlcNAc...) asparagine glycans are attached at residues Asn-528, Asn-537, and Asn-583. Residues Asn-775, Asn-806, and Asn-811 are each glycosylated (N-linked (GlcNAc...) asparagine). A disulfide bridge links Cys-877 with Cys-896. A glycan (N-linked (GlcNAc...) asparagine) is linked at Asn-942. 3 disulfide bridges follow: Cys-1065/Cys-1091, Cys-1120/Cys-1145, and Cys-1188/Cys-1211. Asn-1133 carries an N-linked (GlcNAc...) asparagine glycan. N-linked (GlcNAc...) asparagine glycosylation is present at Asn-1229. Cys-1234 and Cys-1262 are oxidised to a cystine. The N-linked (GlcNAc...) asparagine glycan is linked to Asn-1294. The cysteines at positions 1304 and 1330 are disulfide-linked. The N-linked (GlcNAc...) asparagine glycan is linked to Asn-1353. Intrachain disulfides connect Cys-1428–Cys-1455, Cys-1488–Cys-1522, and Cys-1560–Cys-1586. N-linked (GlcNAc...) asparagine glycosylation occurs at Asn-1513. N-linked (GlcNAc...) asparagine glycosylation is found at Asn-1613, Asn-1631, Asn-1648, and Asn-1674. Cys-1614 and Cys-1641 form a disulfide bridge. An intrachain disulfide couples Cys-1691 to Cys-1720. Residues Asn-1762, Asn-1782, Asn-1866, and Asn-1890 are each glycosylated (N-linked (GlcNAc...) asparagine). Cys-1955 and Cys-1979 are disulfide-bonded. A CUB 11 domain is found at 1955–2083; the sequence is CGGEVRHSQG…PLFKARYEKV (129 aa). N-linked (GlcNAc...) asparagine glycosylation is found at Asn-2005, Asn-2016, and Asn-2017. A disulfide bridge connects residues Cys-2006 and Cys-2027. The tract at residues 2052-2071 is disordered; it reads ASDGNDDDDDTPDIDQQDSN. The span at 2055–2067 shows a compositional bias: acidic residues; the sequence is GNDDDDDTPDIDQ. N-linked (GlcNAc...) asparagine glycosylation occurs at Asn-2193. 2 disulfide bridges follow: Cys-2207/Cys-2238 and Cys-2265/Cys-2295. 5 CUB domains span residues 2207 to 2334, 2335 to 2463, 2467 to 2588, 2590 to 2717, and 2721 to 2859; these read CGGD…YRLT, CNSF…IKEQ, CPSG…YGIA, CGGT…VTMS, and CGGR…YMAI. Asn-2301 and Asn-2305 each carry an N-linked (GlcNAc...) asparagine glycan. 2 cysteine pairs are disulfide-bonded: Cys-2335/Cys-2368 and Cys-2395/Cys-2424. N-linked (GlcNAc...) asparagine glycosylation occurs at Asn-2434. Cystine bridges form between Cys-2467–Cys-2498 and Cys-2590–Cys-2619. N-linked (GlcNAc...) asparagine glycosylation is found at Asn-2599, Asn-2645, Asn-2657, and Asn-2692. A disulfide bridge links Cys-2646 with Cys-2668. Intrachain disulfides connect Cys-2721-Cys-2747 and Cys-2786-Cys-2809. 4 N-linked (GlcNAc...) asparagine glycosylation sites follow: Asn-2811, Asn-2845, Asn-2875, and Asn-2988. 4 disulfide bridges follow: Cys-2996/Cys-3025, Cys-3052/Cys-3074, Cys-3127/Cys-3154, and Cys-3181/Cys-3217. 7 consecutive CUB domains span residues 2996-3121, 3127-3254, 3255-3385, 3387-3508, 3515-3641, 3645-3783, and 3786-3900; these read CGGV…YEFL, CGYH…WEAE, CGAI…YSIN, CGDN…VISS, CGGK…YSIV, CGGW…YNIL, and CNRT…YYTV. The N-linked (GlcNAc...) asparagine glycan is linked to Asn-3235. Intrachain disulfides connect Cys-3255–Cys-3281, Cys-3315–Cys-3335, and Cys-3387–Cys-3418. Residues Asn-3421 and Asn-3461 are each glycosylated (N-linked (GlcNAc...) asparagine). 2 disulfides stabilise this stretch: Cys-3445/Cys-3468 and Cys-3515/Cys-3544. A glycan (N-linked (GlcNAc...) asparagine) is linked at Asn-3635. 2 disulfides stabilise this stretch: Cys-3645–Cys-3680 and Cys-3708–Cys-3742. N-linked (GlcNAc...) asparagine glycosylation is found at Asn-3770, Asn-3787, Asn-3812, Asn-3858, and Asn-3930. 2 cysteine pairs are disulfide-bonded: Cys-3786–Cys-3815 and Cys-3845–Cys-3863.

The protein localises to the secreted. Functionally, cotransporter which plays a role in lipoprotein, vitamin and iron metabolism, by facilitating their uptake. The chain is Cubilin homolog from Caenorhabditis elegans.